Here is a 688-residue protein sequence, read N- to C-terminus: Glycine--tRNA ligase beta subunit (688 aa).

The protein belongs to the class-II aminoacyl-tRNA synthetase family. Tetramer of two alpha and two beta subunits.

The protein localises to the cytoplasm. It carries out the reaction tRNA(Gly) + glycine + ATP = glycyl-tRNA(Gly) + AMP + diphosphate. This chain is Glycine--tRNA ligase beta subunit, found in Haemophilus influenzae (strain PittGG).